An 88-amino-acid polypeptide reads, in one-letter code: Large ribosomal subunit protein bL27 (88 aa).

Positions 1–23 are disordered; it reads MAHKKGTGSTRNGRDSNAQRLGV. Residues 7-19 show a composition bias toward polar residues; the sequence is TGSTRNGRDSNAQ.

The protein belongs to the bacterial ribosomal protein bL27 family.

This Synechococcus elongatus (strain ATCC 33912 / PCC 7942 / FACHB-805) (Anacystis nidulans R2) protein is Large ribosomal subunit protein bL27 (rpmA).